The chain runs to 414 residues: CCA-adding enzyme (414 aa).

Residues glycine 8 and arginine 11 each contribute to the ATP site. CTP contacts are provided by glycine 8 and arginine 11. Mg(2+)-binding residues include aspartate 21 and aspartate 23. Residues arginine 91, arginine 137, and arginine 140 each coordinate ATP. Arginine 91, arginine 137, and arginine 140 together coordinate CTP.

It belongs to the tRNA nucleotidyltransferase/poly(A) polymerase family. Bacterial CCA-adding enzyme type 2 subfamily. Mg(2+) serves as cofactor.

The catalysed reaction is a tRNA precursor + 2 CTP + ATP = a tRNA with a 3' CCA end + 3 diphosphate. The enzyme catalyses a tRNA with a 3' CCA end + 2 CTP + ATP = a tRNA with a 3' CCACCA end + 3 diphosphate. In terms of biological role, catalyzes the addition and repair of the essential 3'-terminal CCA sequence in tRNAs without using a nucleic acid template. Adds these three nucleotides in the order of C, C, and A to the tRNA nucleotide-73, using CTP and ATP as substrates and producing inorganic pyrophosphate. tRNA 3'-terminal CCA addition is required both for tRNA processing and repair. Also involved in tRNA surveillance by mediating tandem CCA addition to generate a CCACCA at the 3' terminus of unstable tRNAs. While stable tRNAs receive only 3'-terminal CCA, unstable tRNAs are marked with CCACCA and rapidly degraded. In Buchnera aphidicola subsp. Acyrthosiphon pisum (strain Tuc7), this protein is CCA-adding enzyme.